Here is a 273-residue protein sequence, read N- to C-terminus: tRNA pseudouridine synthase B (273 aa).

Aspartate 38 serves as the catalytic Nucleophile.

This sequence belongs to the pseudouridine synthase TruB family. Type 1 subfamily.

The enzyme catalyses uridine(55) in tRNA = pseudouridine(55) in tRNA. Its function is as follows. Responsible for synthesis of pseudouridine from uracil-55 in the psi GC loop of transfer RNAs. The chain is tRNA pseudouridine synthase B from Sulfurimonas denitrificans (strain ATCC 33889 / DSM 1251) (Thiomicrospira denitrificans (strain ATCC 33889 / DSM 1251)).